The sequence spans 289 residues: Glucosamine-6-phosphate deaminase 1 (289 aa).

N6-acetyllysine is present on Lys64. Asp72 functions as the Proton acceptor; for enolization step in the catalytic mechanism. The active-site For ring-opening step is the Asp141. The active-site Proton acceptor; for ring-opening step is the His143. The active-site For ring-opening step is Glu148. Thr161 carries the phosphothreonine modification.

This sequence belongs to the glucosamine/galactosamine-6-phosphate isomerase family. In terms of assembly, homohexamer.

The protein resides in the cytoplasm. The enzyme catalyses alpha-D-glucosamine 6-phosphate + H2O = beta-D-fructose 6-phosphate + NH4(+). It participates in nucleotide-sugar biosynthesis; UDP-N-acetyl-alpha-D-glucosamine biosynthesis; alpha-D-glucosamine 6-phosphate from D-fructose 6-phosphate: step 1/1. Allosterically activated by N-acetylglucosamine-6-phosphate (GlcNAc6P). In terms of biological role, catalyzes the reversible conversion of alpha-D-glucosamine 6-phosphate (GlcN-6P) into beta-D-fructose 6-phosphate (Fru-6P) and ammonium ion, a regulatory reaction step in de novo uridine diphosphate-N-acetyl-alpha-D-glucosamine (UDP-GlcNAc) biosynthesis via hexosamine pathway. Deamination is coupled to aldo-keto isomerization mediating the metabolic flux from UDP-GlcNAc toward Fru-6P. At high ammonium level can drive amination and isomerization of Fru-6P toward hexosamines and UDP-GlcNAc synthesis. Has a role in fine tuning the metabolic fluctuations of cytosolic UDP-GlcNAc and their effects on hyaluronan synthesis that occur during tissue remodeling. Seems to trigger calcium oscillations in mammalian eggs. These oscillations serve as the essential trigger for egg activation and early development of the embryo. In Pongo abelii (Sumatran orangutan), this protein is Glucosamine-6-phosphate deaminase 1.